A 952-amino-acid polypeptide reads, in one-letter code: Leucine--tRNA ligase (952 aa).

The 'HIGH' region motif lies at 65–76 (PYPSGAGLHVGH). The 'KMSKS' region motif lies at 727–731 (KMGKS). Residue Lys-730 participates in ATP binding.

The protein belongs to the class-I aminoacyl-tRNA synthetase family.

The protein resides in the cytoplasm. It carries out the reaction tRNA(Leu) + L-leucine + ATP = L-leucyl-tRNA(Leu) + AMP + diphosphate. This Salinispora arenicola (strain CNS-205) protein is Leucine--tRNA ligase.